The sequence spans 352 residues: Protein MGF 360-16R (352 aa).

The protein belongs to the asfivirus MGF 360 family.

Functionally, plays a role in virus cell tropism, and may be required for efficient virus replication in macrophages. This chain is Protein MGF 360-16R, found in African swine fever virus (isolate Warthog/Namibia/Wart80/1980) (ASFV).